Reading from the N-terminus, the 148-residue chain is UPF0179 protein Ta1159 (148 aa).

It belongs to the UPF0179 family.

The protein is UPF0179 protein Ta1159 of Thermoplasma acidophilum (strain ATCC 25905 / DSM 1728 / JCM 9062 / NBRC 15155 / AMRC-C165).